A 614-amino-acid polypeptide reads, in one-letter code: Glutamine--fructose-6-phosphate aminotransferase [isomerizing] (614 aa).

The active-site Nucleophile; for GATase activity is cysteine 2. One can recognise a Glutamine amidotransferase type-2 domain in the interval 2–223; the sequence is CGIIGYIGRR…DGEMAVVTRD (222 aa). 2 SIS domains span residues 292-431 and 463-604; these read YLDR…GRTI and IAVK…VDRP. Lysine 609 functions as the For Fru-6P isomerization activity in the catalytic mechanism.

As to quaternary structure, homodimer.

The protein resides in the cytoplasm. It carries out the reaction D-fructose 6-phosphate + L-glutamine = D-glucosamine 6-phosphate + L-glutamate. Its function is as follows. Catalyzes the first step in hexosamine metabolism, converting fructose-6P into glucosamine-6P using glutamine as a nitrogen source. This chain is Glutamine--fructose-6-phosphate aminotransferase [isomerizing], found in Chlorobaculum tepidum (strain ATCC 49652 / DSM 12025 / NBRC 103806 / TLS) (Chlorobium tepidum).